A 406-amino-acid polypeptide reads, in one-letter code: RILP-like protein 1 (406 aa).

Phosphoserine is present on Ser-7. The region spanning 10-97 (AALSALEKNV…RVERMDRIEK (88 aa)) is the RH1 domain. Cys-47 bears the S-nitrosocysteine mark. Positions 76–258 (ELDELRLELD…KLRERLQGEH (183 aa)) form a coiled coil. Disordered stretches follow at residues 255–280 (QGEHSQNGEEEEAEIQPQPDGEESIS) and 330–354 (EIEEENRIPQPPPITHPRTSPQPES). Ser-259 is subject to Phosphoserine. Positions 262 to 280 (GEEEEAEIQPQPDGEESIS) are enriched in acidic residues. Positions 294-359 (RPRFTLQELR…PQPESGIKRL (66 aa)) constitute an RH2 domain.

This sequence belongs to the RILPL family. As to quaternary structure, interacts (when S-nitrosylated) with GAPDH. Interacts with RAB8A; interaction is dependent on the phosphorylation of 'Thr-72' of RAB8A. Interacts with RAB10 and RAB12; the interaction is dependent on the phosphorylation of 'Thr-73' of RAB10, and 'Ser-105' of RAB12. Post-translationally, S-nitrosylation is required for the interaction with GAPDH.

The protein resides in the cytoplasm. Its subcellular location is the cytosol. The protein localises to the cell projection. It is found in the cilium. It localises to the cytoskeleton. The protein resides in the microtubule organizing center. Its subcellular location is the centrosome. The protein localises to the centriole. Functionally, neuroprotective protein, which acts by sequestring GAPDH in the cytosol and prevent the apoptotic function of GAPDH in the nucleus. Competes with SIAH1 for binding GAPDH. Does not regulate lysosomal morphology and distribution. Plays a role in the regulation of cell shape and polarity. Plays a role in cellular protein transport, including protein transport away from primary cilia. Binds to RAB10 following LRRK2-mediated RAB10 phosphorylation which leads to inhibition of ciliogenesis. The protein is RILP-like protein 1 (Rilpl1) of Mus musculus (Mouse).